An 8515-amino-acid chain; its full sequence is Nonribosomal peptide synthetase 8 (8515 aa).

Adenylation regions lie at residues Arg59 to Ser736 and Ala1163 to Glu1705. A condensation 1 region spans residues Arg587–Asp1159. Residues Glu615–Glu691 form the Carrier 1 domain. An O-(pantetheine 4'-phosphoryl)serine modification is found at Ser652. One can recognise a Carrier 2 domain in the interval Arg1732–Ser1808. At Ser1769 the chain carries O-(pantetheine 4'-phosphoryl)serine. Positions Leu1830–Leu2273 are epimerase 1. Positions Ser2301–Leu2709 are condensation 2. The tract at residues Gln2733–Pro3266 is adenylation 3. One can recognise a Carrier 3 domain in the interval Thr3286–Ser3362. Ser3323 carries the O-(pantetheine 4'-phosphoryl)serine modification. A condensation 3 region spans residues Ser3406–Val3819. The region spanning Glu3857–Asp3933 is the Carrier 4 domain. An O-(pantetheine 4'-phosphoryl)serine modification is found at Ser3894. The tract at residues Leu3953–Leu4392 is epimerase 2. The interval Pro4420–Ile4823 is condensation 4. The segment at Trp4837–Phe5363 is adenylation 4. In terms of domain architecture, Carrier 5 spans Pro5385 to Ile5461. Ser5422 carries the O-(pantetheine 4'-phosphoryl)serine modification. A condensation 5 region spans residues Ser5508–Ser5923. The tract at residues Glu5941 to Arg6459 is adenylation 5. The region spanning Pro6482–Ala6558 is the Carrier 6 domain. The residue at position 6519 (Ser6519) is an O-(pantetheine 4'-phosphoryl)serine. Positions Cys6606 to Leu6992 are condensation 6. The interval Val7030–Val7544 is adenylation 6. The Carrier 7 domain occupies Ile7575–Ala7651. O-(pantetheine 4'-phosphoryl)serine is present on Ser7612. The segment at Leu7670–Thr8119 is epimerase 3. Positions His8164–Asp8504 are condensation 7. The segment covering Ala8488–Leu8500 has biased composition (polar residues). Residues Ala8488–Pro8515 form a disordered region.

The protein belongs to the NRP synthetase family.

Functionally, nonribosomal peptide synthesis (NRPS) is a key mechanism responsible for the biosynthesis of bioactive metabolites which are potentially contributing to organismal virulence. However, contarary to other nonribosomal peptide synthases, NRPS8 does not encode a secreted peptide, but has more a structural role since it is involved in germ tube formation. This is Nonribosomal peptide synthetase 8 (NRPS8) from Aspergillus fumigatus (strain ATCC MYA-4609 / CBS 101355 / FGSC A1100 / Af293) (Neosartorya fumigata).